Reading from the N-terminus, the 870-residue chain is Linoleate 9S-lipoxygenase 2 (870 aa).

In terms of domain architecture, PLAT spans 32-158 (NDFGATVIDG…KYRYNRVFFS (127 aa)). Positions 161-870 (TSLPSKMPAA…ARGIPNSISI (710 aa)) constitute a Lipoxygenase domain. The segment at 203–243 (YNDLGEPDSGNPRPVLGGSPDRPYPRRGRTGRKPTKTDPTA) is disordered. The segment covering 227–236 (PRRGRTGRKP) has biased composition (basic residues). Histidine 525, histidine 530, histidine 716, asparagine 720, and isoleucine 870 together coordinate Fe cation.

It belongs to the lipoxygenase family. Monomer. Fe cation is required as a cofactor.

It is found in the cytoplasm. It carries out the reaction (9Z,12Z)-octadecadienoate + O2 = (9S)-hydroperoxy-(10E,12Z)-octadecadienoate. It participates in lipid metabolism; oxylipin biosynthesis. Functionally, plant lipoxygenase may be involved in a number of diverse aspects of plant physiology including growth and development, pest resistance, and senescence or responses to wounding. Catalyzes the hydroperoxidation of lipids containing a cis,cis-1,4-pentadiene structure. The chain is Linoleate 9S-lipoxygenase 2 (LOX1.1) from Oryza sativa subsp. japonica (Rice).